A 140-amino-acid chain; its full sequence is MAIERTLSIIKPDATKRNLTGKINAKFEEAGLRIVAQKRIQLTLAQAGQFYAEHKERPFYGELTEFMTSEPVVVQVLEGEGAILKNREVMGATNPANADEGTIRKEFALSVGENSVHGSDSPEAAAREIAFFFSGLELVG.

Residues Lys11, Phe59, Arg87, Thr93, Arg104, and Asn114 each contribute to the ATP site. His117 (pros-phosphohistidine intermediate) is an active-site residue.

It belongs to the NDK family. Homotetramer. Mg(2+) serves as cofactor.

It is found in the cytoplasm. It carries out the reaction a 2'-deoxyribonucleoside 5'-diphosphate + ATP = a 2'-deoxyribonucleoside 5'-triphosphate + ADP. The catalysed reaction is a ribonucleoside 5'-diphosphate + ATP = a ribonucleoside 5'-triphosphate + ADP. In terms of biological role, major role in the synthesis of nucleoside triphosphates other than ATP. The ATP gamma phosphate is transferred to the NDP beta phosphate via a ping-pong mechanism, using a phosphorylated active-site intermediate. The chain is Nucleoside diphosphate kinase from Paracoccus denitrificans (strain Pd 1222).